The following is an 872-amino-acid chain: Valine--tRNA ligase (872 aa).

Residues 49 to 59 (PNVTGILHIGH) carry the 'HIGH' region motif. Residues 531 to 535 (KMSKS) carry the 'KMSKS' region motif. Residue lysine 534 participates in ATP binding. A coiled-coil region spans residues 810–871 (PLIARLKKQL…IQQELDLLEQ (62 aa)).

Belongs to the class-I aminoacyl-tRNA synthetase family. ValS type 1 subfamily. In terms of assembly, monomer.

Its subcellular location is the cytoplasm. It catalyses the reaction tRNA(Val) + L-valine + ATP = L-valyl-tRNA(Val) + AMP + diphosphate. Functionally, catalyzes the attachment of valine to tRNA(Val). As ValRS can inadvertently accommodate and process structurally similar amino acids such as threonine, to avoid such errors, it has a 'posttransfer' editing activity that hydrolyzes mischarged Thr-tRNA(Val) in a tRNA-dependent manner. The protein is Valine--tRNA ligase of Helicobacter pylori (strain J99 / ATCC 700824) (Campylobacter pylori J99).